Here is a 76-residue protein sequence, read N- to C-terminus: Small ribosomal subunit protein bS18 (76 aa).

This sequence belongs to the bacterial ribosomal protein bS18 family. Part of the 30S ribosomal subunit. Forms a tight heterodimer with protein bS6.

Binds as a heterodimer with protein bS6 to the central domain of the 16S rRNA, where it helps stabilize the platform of the 30S subunit. The polypeptide is Small ribosomal subunit protein bS18 (Marinomonas sp. (strain MWYL1)).